Here is a 578-residue protein sequence, read N- to C-terminus: Vacuolar protein 8 (578 aa).

ARM repeat units lie at residues 58–95 (NRAETDFFSGEPLRALSTLVYSDNVDLQRSASLTFAEI), 96–135 (TERDVREVDRDTLEPILFLLQSSDIEVQRAASAALGNLAV), 137–176 (AENKVLIVALGGLTPLIRQMMSPNVEVQCNAVGCITNLAT), 178–217 (EDNKAKIARSGALGPLIRLAKSKDMRVQRNATGALLNMTH), 219–258 (DDNRQQLVNAGAIPVLVQLLSSPDVDVQYYCTTALSNIAV), 262–301 (NRKRLAQTESRLVQSLVHLMDSSTPKVQCQAALALRNLAS), 303–342 (EKYQLEIVRAKGLPPLLRLLQSSYLPLILSAVACIRNISI), 344–384 (PLNE…NLAA), and 428–467 (DELKPHLLNLGVFDVLIPLTNSESIEVQGNSAAALGNLSS).

It belongs to the beta-catenin family.

It is found in the vacuole membrane. Its function is as follows. Functions in both vacuole inheritance and protein targeting from the cytoplasm to vacuole. The sequence is that of Vacuolar protein 8 (vac8) from Aspergillus fumigatus (strain ATCC MYA-4609 / CBS 101355 / FGSC A1100 / Af293) (Neosartorya fumigata).